Reading from the N-terminus, the 356-residue chain is Tyrosine recombinase XerS (356 aa).

The 106-residue stretch at 16 to 121 folds into the Core-binding (CB) domain; that stretch reads IMPWYVLDYY…ALSSLYKYLT (106 aa). The region spanning 169–354 is the Tyr recombinase domain; it reads AFLDYVDKEY…VNDEQKNALD (186 aa). Catalysis depends on residues Arg-210, Lys-234, His-306, Arg-309, and His-332. Tyr-341 (O-(3'-phospho-DNA)-tyrosine intermediate) is an active-site residue.

Belongs to the 'phage' integrase family. XerS subfamily.

The protein localises to the cytoplasm. Its activity is regulated as follows. FtsK is required for recombination. Functionally, site-specific tyrosine recombinase, which acts by catalyzing the cutting and rejoining of the recombining DNA molecules. Essential to convert dimers of the bacterial chromosome into monomers to permit their segregation at cell division. This chain is Tyrosine recombinase XerS, found in Streptococcus equi subsp. zooepidemicus (strain MGCS10565).